The sequence spans 273 residues: Small ribosomal subunit protein eS1 (273 aa).

This sequence belongs to the eukaryotic ribosomal protein eS1 family. As to quaternary structure, component of the small ribosomal subunit. Mature ribosomes consist of a small (40S) and a large (60S) subunit. The 40S subunit contains about 33 different proteins and 1 molecule of RNA (18S). The 60S subunit contains about 49 different proteins and 3 molecules of RNA (25S, 5.8S and 5S).

The protein resides in the cytoplasm. This chain is Small ribosomal subunit protein eS1 (rps3a), found in Dictyostelium discoideum (Social amoeba).